The chain runs to 287 residues: Putative S-adenosyl-L-methionine-dependent methyltransferase SACE_1742 (287 aa).

S-adenosyl-L-methionine contacts are provided by residues Asp-119 and 148 to 149 (DL).

This sequence belongs to the UPF0677 family.

Exhibits S-adenosyl-L-methionine-dependent methyltransferase activity. The polypeptide is Putative S-adenosyl-L-methionine-dependent methyltransferase SACE_1742 (Saccharopolyspora erythraea (strain ATCC 11635 / DSM 40517 / JCM 4748 / NBRC 13426 / NCIMB 8594 / NRRL 2338)).